The chain runs to 134 residues: Large ribosomal subunit protein bL21 (134 aa).

The protein belongs to the bacterial ribosomal protein bL21 family. Part of the 50S ribosomal subunit. Contacts protein L20.

Its function is as follows. This protein binds to 23S rRNA in the presence of protein L20. The sequence is that of Large ribosomal subunit protein bL21 from Pelagibacter ubique (strain HTCC1062).